The following is a 37-amino-acid chain: U10-ctenitoxin-Co1a (37 aa).

4 disulfide bridges follow: Cys2–Cys17, Cys9–Cys22, Cys16–Cys33, and Cys24–Cys31.

Expressed by the venom gland.

The protein localises to the secreted. Antagonist of L-type calcium channels (Cav1/CACNA1). The sequence is that of U10-ctenitoxin-Co1a from Ctenus ornatus (Brazilian spider).